The primary structure comprises 144 residues: Transcriptional regulator SlyA (144 aa).

An HTH marR-type domain is found at 2–135 (ESPLGSDLAR…LNKIISKLEK (134 aa)). Residues 49–72 (QIQLAKAIGIEQPSLVRTLDQLEE) constitute a DNA-binding region (H-T-H motif).

It belongs to the SlyA family. As to quaternary structure, homodimer.

In terms of biological role, transcription regulator that can specifically activate or repress expression of target genes. This is Transcriptional regulator SlyA from Blochmanniella pennsylvanica (strain BPEN).